The primary structure comprises 229 residues: Uracil-DNA glycosylase (229 aa).

Residue D64 is the Proton acceptor of the active site.

The protein belongs to the uracil-DNA glycosylase (UDG) superfamily. UNG family.

Its subcellular location is the cytoplasm. It catalyses the reaction Hydrolyzes single-stranded DNA or mismatched double-stranded DNA and polynucleotides, releasing free uracil.. Functionally, excises uracil residues from the DNA which can arise as a result of misincorporation of dUMP residues by DNA polymerase or due to deamination of cytosine. This Salmonella choleraesuis (strain SC-B67) protein is Uracil-DNA glycosylase.